Consider the following 826-residue polypeptide: Lysine-specific histone demethylase 1B (826 aa).

Residues 1-11 show a composition bias toward basic residues; it reads MAASRGRSKKR. The disordered stretch occupies residues 1–46; that stretch reads MAASRGRSKKRSNLELSPDNLPLRSSGRQAKKKAVEIPDEDEDGSS. Serine 17 and serine 26 each carry phosphoserine. The Zn(2+) site is built by cysteine 53, cysteine 58, cysteine 65, cysteine 73, histidine 84, histidine 90, cysteine 92, cysteine 95, cysteine 142, cysteine 147, cysteine 169, and cysteine 185. The segment at 133–193 adopts a CW-type zinc-finger fold; sequence DQQLPYWVQC…HCSFPEDLRV (61 aa). Serine 253 is modified (phosphoserine). The GLYR1-binding stretch occupies residues 279–298; that stretch reads YQPNECGKALCVRPDVMELD. An SWIRM domain is found at 281-379; it reads PNECGKALCV…TGVLTVAAGQ (99 aa). 389-445 contributes to the FAD binding site; it reads KSVLVVGAGPAGLAAARQLHNFGMKVTVLEAKDRIGGRVWDDKSFKGVVVGRGPQIV. 3 histone H3-binding regions span residues 444–473, 493–504, and 544–578; these read IVNGCINNPVALMCEQLGISMRKLGERCDL, FNALLDVVSEWR, and FHLSNLEYACGSSLHQVSARSWDHNEFFAQFAGDH. The GLYR1-binding stretch occupies residues 570–572; the sequence is FFA. Residues valine 604, glutamate 799, and 807-809 contribute to the FAD site; that span reads QTV. The tract at residues 802 to 818 is GLYR1-binding; it reads NRHFPQTVTGAYLSGVR.

The protein belongs to the flavin monoamine oxidase family. In terms of assembly, interacts with its cofactor GLYR1 at nucleosomes; this interaction stimulates H3K4me1 and H3K4me2 demethylation. In contrast to KDM1A, does not form a complex with RCOR1/CoREST. Possible accessory component of the polycomb repressive deubiquitinase (PR-DUB) complex, at least composed of BAP1, one of ASXL1, ASXL2 or (probably) ASXL3 and one of MBD5 or MBD6. The PR-DUB core associates with a number of accessory proteins, including FOXK1, FOXK2, KDM1B, HCFC1 and OGT; KDM1B specifically associates with ASXL2 PR-DUB complexes. It depends on FAD as a cofactor. The cofactor is Zn(2+). In terms of tissue distribution, expressed in growing oocytes and in intestinal gland.

The protein resides in the nucleus. It is found in the chromosome. The enzyme catalyses N(6),N(6)-dimethyl-L-lysyl(4)-[histone H3] + 2 A + 2 H2O = L-lysyl(4)-[histone H3] + 2 formaldehyde + 2 AH2. The catalysed reaction is N(6)-methyl-L-lysyl(4)-[histone H3] + A + H2O = L-lysyl(4)-[histone H3] + formaldehyde + AH2. With respect to regulation, inhibited by tranylcypromine, but not by pargyline, deprenyl or rasagiline. Histone H3K4me1 and H3K4me2 demethylase activity is inhibited by DNA, this inhibition is released in complex with GLYR1. Histone demethylase that demethylates 'Lys-4' of histone H3, a specific tag for epigenetic transcriptional activation, thereby acting as a corepressor. Required for de novo DNA methylation of a subset of imprinted genes during oogenesis. Acts by oxidizing the substrate by FAD to generate the corresponding imine that is subsequently hydrolyzed. Demethylates both mono- and di-methylated 'Lys-4' of histone H3. Has no effect on tri-methylated 'Lys-4', mono-, di- or tri-methylated 'Lys-9', mono-, di- or tri-methylated 'Lys-27', mono-, di- or tri-methylated 'Lys-36' of histone H3, or on mono-, di- or tri-methylated 'Lys-20' of histone H4. In terms of biological role, histone demethylase that demethylates 'Lys-4' of histone H3, a specific tag for epigenetic transcriptional activation, thereby acting as a corepressor. Required for de novo DNA methylation of a subset of imprinted genes during oogenesis. Acts by oxidizing the substrate by FAD to generate the corresponding imine that is subsequently hydrolyzed. Demethylates both mono- and di-methylated 'Lys-4' of histone H3. Has no effect on tri-methylated 'Lys-4', mono-, di- or tri-methylated 'Lys-9', mono-, di- or tri-methylated 'Lys-27', mono-, di- or tri-methylated 'Lys-36' of histone H3, or on mono-, di- or tri-methylated 'Lys-20' of histone H4. Alone, it is unable to demethylate H3K4me on nucleosomes and requires the presence of GLYR1 to achieve such activity, they form a multifunctional enzyme complex that modifies transcribed chromatin and facilitates Pol II transcription through nucleosomes. The chain is Lysine-specific histone demethylase 1B from Mus musculus (Mouse).